The sequence spans 165 residues: 3-isopropylmalate dehydratase small subunit (165 aa).

This sequence belongs to the LeuD family. LeuD type 2 subfamily. As to quaternary structure, heterodimer of LeuC and LeuD.

The enzyme catalyses (2R,3S)-3-isopropylmalate = (2S)-2-isopropylmalate. It participates in amino-acid biosynthesis; L-leucine biosynthesis; L-leucine from 3-methyl-2-oxobutanoate: step 2/4. In terms of biological role, catalyzes the isomerization between 2-isopropylmalate and 3-isopropylmalate, via the formation of 2-isopropylmaleate. The protein is 3-isopropylmalate dehydratase small subunit of Hydrogenobaculum sp. (strain Y04AAS1).